Consider the following 465-residue polypeptide: UDP-glucose:undecaprenyl-phosphate glucose-1-phosphate transferase (465 aa).

A run of 5 helical transmembrane segments spans residues 23–43, 46–66, 82–102, 105–125, and 280–300; these read FSDI…NDYF, LHYV…GGIT, ILIL…VTLF, FDLT…GFVV, and IIVS…IATA.

The protein belongs to the bacterial sugar transferase family.

The protein localises to the cell inner membrane. It catalyses the reaction di-trans,octa-cis-undecaprenyl phosphate + UDP-alpha-D-glucose = alpha-D-glucosyl di-trans,octa-cis-undecaprenyl diphosphate + UMP. Its pathway is capsule biogenesis; capsule polysaccharide biosynthesis. Functionally, is likely the initiating enzyme for the K2 capsular polysaccharide synthesis. Catalyzes the transfer of the glucose-1-phosphate moiety from UDP-Glc onto the carrier lipid undecaprenyl phosphate (C55-P), forming a phosphoanhydride bond yielding to glucosyl-pyrophosphoryl-undecaprenol (Glc-PP-C55). This Klebsiella pneumoniae protein is UDP-glucose:undecaprenyl-phosphate glucose-1-phosphate transferase.